A 119-amino-acid polypeptide reads, in one-letter code: Ribonuclease P protein component (119 aa).

This sequence belongs to the RnpA family. In terms of assembly, consists of a catalytic RNA component (M1 or rnpB) and a protein subunit.

It catalyses the reaction Endonucleolytic cleavage of RNA, removing 5'-extranucleotides from tRNA precursor.. Its function is as follows. RNaseP catalyzes the removal of the 5'-leader sequence from pre-tRNA to produce the mature 5'-terminus. It can also cleave other RNA substrates such as 4.5S RNA. The protein component plays an auxiliary but essential role in vivo by binding to the 5'-leader sequence and broadening the substrate specificity of the ribozyme. The chain is Ribonuclease P protein component from Listeria monocytogenes serotype 4b (strain CLIP80459).